A 72-amino-acid chain; its full sequence is Putative snRNP Sm-like protein (72 aa).

The Sm domain occupies 4 to 72 (RPLDILNNAL…RGDNVVYVSP (69 aa)).

Belongs to the snRNP Sm proteins family.

This Methanosarcina acetivorans (strain ATCC 35395 / DSM 2834 / JCM 12185 / C2A) protein is Putative snRNP Sm-like protein.